Reading from the N-terminus, the 626-residue chain is Chaperone protein DnaK (626 aa).

Phosphothreonine; by autocatalysis is present on Thr197. The span at 598–612 shows a compositional bias: low complexity; sequence AQGEQGQAAQPQAET. The disordered stretch occupies residues 598 to 626; that stretch reads AQGEQGQAAQPQAETQGDDVQDVEFEEVK. Acidic residues predominate over residues 613–626; it reads QGDDVQDVEFEEVK.

It belongs to the heat shock protein 70 family.

In terms of biological role, acts as a chaperone. This Flavobacterium psychrophilum (strain ATCC 49511 / DSM 21280 / CIP 103535 / JIP02/86) protein is Chaperone protein DnaK.